A 385-amino-acid chain; its full sequence is Lipid-A-disaccharide synthase (385 aa).

It belongs to the LpxB family.

It catalyses the reaction 2-N,3-O-bis[(3R)-3-hydroxytetradecanoyl]-alpha-D-glucosaminyl 1-phosphate + UDP-2-N,3-O-bis[(3R)-3-hydroxytetradecanoyl]-alpha-D-glucosamine = lipid A disaccharide (E. coli) + UDP + H(+). The catalysed reaction is a lipid X + a UDP-2-N,3-O-bis[(3R)-3-hydroxyacyl]-alpha-D-glucosamine = a lipid A disaccharide + UDP + H(+). It participates in glycolipid biosynthesis; lipid IV(A) biosynthesis; lipid IV(A) from (3R)-3-hydroxytetradecanoyl-[acyl-carrier-protein] and UDP-N-acetyl-alpha-D-glucosamine: step 5/6. In terms of biological role, condensation of UDP-2,3-diacylglucosamine and 2,3-diacylglucosamine-1-phosphate to form lipid A disaccharide, a precursor of lipid A, a phosphorylated glycolipid that anchors the lipopolysaccharide to the outer membrane of the cell. The sequence is that of Lipid-A-disaccharide synthase from Wigglesworthia glossinidia brevipalpis.